A 221-amino-acid chain; its full sequence is Probable septum site-determining protein MinC (221 aa).

Belongs to the MinC family. As to quaternary structure, interacts with MinD and FtsZ.

Functionally, cell division inhibitor that blocks the formation of polar Z ring septums. Rapidly oscillates between the poles of the cell to destabilize FtsZ filaments that have formed before they mature into polar Z rings. Prevents FtsZ polymerization. The polypeptide is Probable septum site-determining protein MinC (Shewanella frigidimarina (strain NCIMB 400)).